The primary structure comprises 463 residues: Chaperone SurA (463 aa).

The first 25 residues, 1 to 25, serve as a signal peptide directing secretion; the sequence is MTKPFSVVLASLLAITSTVSPLASA. PpiC domains lie at 174–276 and 289–388; these read GSQY…KLVE and VTEY…QRVG. Disordered regions lie at residues 328–348 and 432–463; these read QATA…GDLG and RTGD…KPTR. Positions 440–452 are enriched in low complexity; it reads NATAAPAKSADPA. Over residues 453-463 the composition is skewed to pro residues; sequence APSPPPAKPTR.

Its subcellular location is the periplasm. The enzyme catalyses [protein]-peptidylproline (omega=180) = [protein]-peptidylproline (omega=0). Its function is as follows. Chaperone involved in the correct folding and assembly of outer membrane proteins. Recognizes specific patterns of aromatic residues and the orientation of their side chains, which are found more frequently in integral outer membrane proteins. May act in both early periplasmic and late outer membrane-associated steps of protein maturation. In Xanthomonas euvesicatoria pv. vesicatoria (strain 85-10) (Xanthomonas campestris pv. vesicatoria), this protein is Chaperone SurA.